Reading from the N-terminus, the 360-residue chain is Protein-glutamate methylesterase/protein-glutamine glutaminase 3 (360 aa).

The Response regulatory domain occupies Arg14 to Glu131. Asp65 bears the 4-aspartylphosphate mark. Residues Ala169–Ala360 form the CheB-type methylesterase domain. Residues Ser181, His207, and Asp303 contribute to the active site.

This sequence belongs to the CheB family. Phosphorylated by CheA. Phosphorylation of the N-terminal regulatory domain activates the methylesterase activity.

Its subcellular location is the cytoplasm. It catalyses the reaction [protein]-L-glutamate 5-O-methyl ester + H2O = L-glutamyl-[protein] + methanol + H(+). The catalysed reaction is L-glutaminyl-[protein] + H2O = L-glutamyl-[protein] + NH4(+). Involved in chemotaxis. Part of a chemotaxis signal transduction system that modulates chemotaxis in response to various stimuli. Catalyzes the demethylation of specific methylglutamate residues introduced into the chemoreceptors (methyl-accepting chemotaxis proteins or MCP) by CheR. Also mediates the irreversible deamidation of specific glutamine residues to glutamic acid. The sequence is that of Protein-glutamate methylesterase/protein-glutamine glutaminase 3 from Burkholderia thailandensis (strain ATCC 700388 / DSM 13276 / CCUG 48851 / CIP 106301 / E264).